The sequence spans 423 residues: Histidine--tRNA ligase (423 aa).

This sequence belongs to the class-II aminoacyl-tRNA synthetase family. As to quaternary structure, homodimer.

The protein localises to the cytoplasm. It catalyses the reaction tRNA(His) + L-histidine + ATP = L-histidyl-tRNA(His) + AMP + diphosphate + H(+). This chain is Histidine--tRNA ligase, found in Haemophilus influenzae (strain PittEE).